We begin with the raw amino-acid sequence, 757 residues long: Xaa-Pro dipeptidyl-peptidase (757 aa).

Residues Ser-348, Asp-468, and His-498 each act as charge relay system in the active site.

The protein belongs to the peptidase S15 family. As to quaternary structure, homodimer.

It localises to the cytoplasm. It catalyses the reaction Hydrolyzes Xaa-Pro-|- bonds to release unblocked, N-terminal dipeptides from substrates including Ala-Pro-|-p-nitroanilide and (sequentially) Tyr-Pro-|-Phe-Pro-|-Gly-Pro-|-Ile.. In terms of biological role, removes N-terminal dipeptides sequentially from polypeptides having unsubstituted N-termini provided that the penultimate residue is proline. The polypeptide is Xaa-Pro dipeptidyl-peptidase (Streptococcus pneumoniae serotype 19F (strain G54)).